Consider the following 725-residue polypeptide: Rab-like protein 6 (725 aa).

Residue M1 is modified to N-acetylmethionine. Residues G39–S279 are small GTPase-like. Residues G50–T57, D100–K104, and Y177–D179 contribute to the GTP site. 2 disordered regions span residues G281–A364 and P378–L725. Composition is skewed to low complexity over residues Q291–L325 and A343–P353. The span at G410–V427 shows a compositional bias: basic and acidic residues. Phosphoserine occurs at positions 414, 436, 438, 480, 482, 483, and 502. A compositionally biased stretch (polar residues) spans Q499 to S514. The segment covering D537 to V549 has biased composition (basic and acidic residues). Acidic residues predominate over residues D569 to S578. 2 positions are modified to phosphoserine: S575 and S594. A Phosphothreonine modification is found at T597. Basic and acidic residues predominate over residues M632–K649. 3 positions are modified to phosphoserine: S637, S638, and S644. An interaction with CDKN2A region spans residues K652–K690. Residues T666 to S675 are compositionally biased toward basic residues. A compositionally biased stretch (gly residues) spans L707–L725.

The protein belongs to the small GTPase superfamily. Rab family.

It is found in the nucleus. It localises to the cytoplasm. May enhance cellular proliferation. May reduce growth inhibitory activity of CDKN2A. The sequence is that of Rab-like protein 6 (Rabl6) from Mus musculus (Mouse).